A 505-amino-acid polypeptide reads, in one-letter code: MSDLPPTDSNAPPYSVSELAFALKRTLEDRYGFVRLRGELSKVTHHSNGHVYLTIKDDKSAIDGVVWKGNVRGLGVRPEHGLEVIVTGKITTYPAGSRYQIVIDSMEAAGVGALLAQLERLKAKLAAEGLFAPERKRPLPSMPAVVGVITSPTGAVIRDILHRIRDRWPCQVLVWPCVVQGDAAAGQVSAAIRGFNAIQPGGPVPRPDVLIVARGGGSVEDLWAFNDEGLARTVAEGTIPLISAVGHETDTTLIDFVSDRRAPTPTAAAEMATPVLAELRALISDLDRRLNRCGARTIEERRTRLVSAARGLPRPNDLLALAQQRFDIASGRLDAALDRNTTVHAQSLLKVTARLTPEALGRQRAVKAERLADLSRRLDLAARRAPDRVAQHARLPALWDRLNAAGQRRLQRDADRLENLEKLRQSLNPERPLELGFALVRKGDGTLARSAADLVSGERVNLKFKSGDRDAVIDGEGGPAPAPTAPAPKPRPKPAAPPAGQGDLF.

Residues 466 to 505 are disordered; it reads SGDRDAVIDGEGGPAPAPTAPAPKPRPKPAAPPAGQGDLF. Over residues 480–497 the composition is skewed to pro residues; sequence APAPTAPAPKPRPKPAAP.

The protein belongs to the XseA family. As to quaternary structure, heterooligomer composed of large and small subunits.

The protein resides in the cytoplasm. The catalysed reaction is Exonucleolytic cleavage in either 5'- to 3'- or 3'- to 5'-direction to yield nucleoside 5'-phosphates.. In terms of biological role, bidirectionally degrades single-stranded DNA into large acid-insoluble oligonucleotides, which are then degraded further into small acid-soluble oligonucleotides. This is Exodeoxyribonuclease 7 large subunit from Caulobacter vibrioides (strain NA1000 / CB15N) (Caulobacter crescentus).